Consider the following 436-residue polypeptide: Anaerobic glycerol-3-phosphate dehydrogenase subunit B (436 aa).

Belongs to the anaerobic G-3-P dehydrogenase subunit B family. Composed of a catalytic GlpA/B dimer and of membrane bound GlpC. It depends on FMN as a cofactor.

The catalysed reaction is a quinone + sn-glycerol 3-phosphate = dihydroxyacetone phosphate + a quinol. It functions in the pathway polyol metabolism; glycerol degradation via glycerol kinase pathway; glycerone phosphate from sn-glycerol 3-phosphate (anaerobic route): step 1/1. Functionally, conversion of glycerol 3-phosphate to dihydroxyacetone. Uses fumarate or nitrate as electron acceptor. This Vibrio cholerae serotype O1 (strain ATCC 39315 / El Tor Inaba N16961) protein is Anaerobic glycerol-3-phosphate dehydrogenase subunit B.